A 364-amino-acid polypeptide reads, in one-letter code: Aminomethyltransferase (364 aa).

This sequence belongs to the GcvT family. The glycine cleavage system is composed of four proteins: P, T, L and H.

It carries out the reaction N(6)-[(R)-S(8)-aminomethyldihydrolipoyl]-L-lysyl-[protein] + (6S)-5,6,7,8-tetrahydrofolate = N(6)-[(R)-dihydrolipoyl]-L-lysyl-[protein] + (6R)-5,10-methylene-5,6,7,8-tetrahydrofolate + NH4(+). Its function is as follows. The glycine cleavage system catalyzes the degradation of glycine. This chain is Aminomethyltransferase, found in Shewanella putrefaciens (strain CN-32 / ATCC BAA-453).